Consider the following 552-residue polypeptide: Arginine--tRNA ligase (552 aa).

A 'HIGH' region motif is present at residues 123–133 (ANPTGPLTIGR).

The protein belongs to the class-I aminoacyl-tRNA synthetase family. Monomer.

The protein resides in the cytoplasm. It carries out the reaction tRNA(Arg) + L-arginine + ATP = L-arginyl-tRNA(Arg) + AMP + diphosphate. The chain is Arginine--tRNA ligase from Chlorobium luteolum (strain DSM 273 / BCRC 81028 / 2530) (Pelodictyon luteolum).